The primary structure comprises 146 residues: Large ribosomal subunit protein uL15 (146 aa).

Residues 18 to 45 (VLGRGLGCGKGKTSGRGHKGQKARSGCA) form a disordered region. Over residues 30–39 (TSGRGHKGQK) the composition is skewed to basic residues.

The protein belongs to the universal ribosomal protein uL15 family. As to quaternary structure, part of the 50S ribosomal subunit.

Binds to the 23S rRNA. The chain is Large ribosomal subunit protein uL15 from Anaplasma marginale (strain St. Maries).